The primary structure comprises 192 residues: Dynein axonemal light chain 1 (192 aa).

4 LRR repeats span residues 49–70 (NCERLSLSTNCIEKIANLNGLK), 71–92 (NLKILSLGRNNIKNLNGLEAVG), 94–115 (TLEELWISYNLIEKLKGIHVMK), and 116–137 (KLKVLYMSNNLVKEWGEFLKLA). The LRRCT domain maps to 150-192 (NPLEEKYSADGNWIEEATKRLPKLKKLDGNPVIKQEEETEGES).

This sequence belongs to the dynein light chain LC1-type family. As to quaternary structure, interacts with DNAH5, a outer arm dynein heavy chain. Interacts with tubulin located within the A-tubule of the outer doublets in a ATP-independent manner.

It is found in the cytoplasm. It localises to the cytoskeleton. The protein localises to the cilium axoneme. Its function is as follows. Part of the multisubunit axonemal ATPase complexes that generate the force for cilia motility and govern beat frequency. Component of the outer arm dynein (ODA). May be involved in a mechanosensory feedback mechanism controlling ODA activity based on external conformational cues by tethering the outer arm dynein heavy chain (DNAH5) to the microtubule within the axoneme. This chain is Dynein axonemal light chain 1 (dnal1), found in Danio rerio (Zebrafish).